The sequence spans 132 residues: Small ribosomal subunit protein uS8 (132 aa).

Belongs to the universal ribosomal protein uS8 family. Part of the 30S ribosomal subunit. Contacts proteins S5 and S12.

Functionally, one of the primary rRNA binding proteins, it binds directly to 16S rRNA central domain where it helps coordinate assembly of the platform of the 30S subunit. The polypeptide is Small ribosomal subunit protein uS8 (Acetivibrio thermocellus (strain ATCC 27405 / DSM 1237 / JCM 9322 / NBRC 103400 / NCIMB 10682 / NRRL B-4536 / VPI 7372) (Clostridium thermocellum)).